The sequence spans 345 residues: Phenylalanine--tRNA ligase alpha subunit (345 aa).

Position 272 (Glu272) interacts with Mg(2+).

It belongs to the class-II aminoacyl-tRNA synthetase family. Phe-tRNA synthetase alpha subunit type 1 subfamily. Tetramer of two alpha and two beta subunits. Mg(2+) serves as cofactor.

It localises to the cytoplasm. It carries out the reaction tRNA(Phe) + L-phenylalanine + ATP = L-phenylalanyl-tRNA(Phe) + AMP + diphosphate + H(+). This Prochlorococcus marinus (strain MIT 9312) protein is Phenylalanine--tRNA ligase alpha subunit.